An 88-amino-acid polypeptide reads, in one-letter code: Large ribosomal subunit protein bL27 (88 aa).

Residues 1–21 (MAHKKGTGSTRNGRDSNAKRL) form a disordered region.

Belongs to the bacterial ribosomal protein bL27 family.

The chain is Large ribosomal subunit protein bL27 from Parasynechococcus marenigrum (strain WH8102).